We begin with the raw amino-acid sequence, 1170 residues long: Disease resistance protein LAZ5 (1170 aa).

One can recognise a TIR domain in the interval 10 to 172; that stretch reads ESWQVFINFR…KIIDSIKKVL (163 aa). Glu-84 is an active-site residue. The interval 193 to 219 is disordered; sequence EAKNVDTFSPNSSDFPSTSIDDDLSIN. Polar residues predominate over residues 198 to 219; sequence DTFSPNSSDFPSTSIDDDLSIN. The 253-residue stretch at 261–513 folds into the NB-ARC domain; it reads RLKEMEEKLD…DVACFFKSEN (253 aa). LRR repeat units follow at residues 595-616, 622-645, 646-670, 677-700, 723-747, 761-785, 790-813, 815-837, 838-861, 862-885, 888-904, and 905-930; these read MENV…TFDG, MCNL…IFKF, DTVR…PWEK, PENL…VKDT, AKNL…MENM, LTCL…KLEE, SENL…AGDL, RLVV…LGKQ, KALQ…VKDM, KHLR…SLKC, LSRN…LKDF, and SNLK…CLEY.

It catalyses the reaction NAD(+) + H2O = ADP-D-ribose + nicotinamide + H(+). TIR-NB-LRR receptor-like protein that may play a role in plant innate immunity. May trigger hypersensitive programmed cell death in response to pathogen attack. Involved in tolerance to tobacco ringspot virus (TRSV). The chain is Disease resistance protein LAZ5 from Arabidopsis thaliana (Mouse-ear cress).